A 654-amino-acid chain; its full sequence is Fructose-1,6-bisphosphatase class 3 (654 aa).

The interval 288 to 307 (NPAFKPKKRPDKHERLTQRE) is disordered. Over residues 298 to 307 (DKHERLTQRE) the composition is skewed to basic and acidic residues.

This sequence belongs to the FBPase class 3 family. The cofactor is Mn(2+).

It catalyses the reaction beta-D-fructose 1,6-bisphosphate + H2O = beta-D-fructose 6-phosphate + phosphate. It participates in carbohydrate biosynthesis; gluconeogenesis. The chain is Fructose-1,6-bisphosphatase class 3 from Staphylococcus aureus (strain MSSA476).